The primary structure comprises 167 residues: MFLNLLDAPRRLLALVALGCVALLAFGLYLQHVVGLEPCPMCIVQRYALVLVAIVAGLTAITSNKKGLITGSGVLLLLAGFGAFVAARQSFLQWYPPEVASCGRDFYGMIETFPLQRAIPMIFKGSGDCAKVDWTFLGGSIANWSFVCFAVIGLTALTLIARLARQR.

The Cytoplasmic portion of the chain corresponds to 1-12 (MFLNLLDAPRRL). The helical transmembrane segment at 13 to 29 (LALVALGCVALLAFGLY) threads the bilayer. Over 30–47 (LQHVVGLEPCPMCIVQRY) the chain is Periplasmic. The cysteines at positions 39 and 42 are disulfide-linked. A helical membrane pass occupies residues 48-63 (ALVLVAIVAGLTAITS). At 64–69 (NKKGLI) the chain is on the cytoplasmic side. The chain crosses the membrane as a helical span at residues 70 to 87 (TGSGVLLLLAGFGAFVAA). The Periplasmic portion of the chain corresponds to 88-143 (RQSFLQWYPPEVASCGRDFYGMIETFPLQRAIPMIFKGSGDCAKVDWTFLGGSIAN). Residues cysteine 102 and cysteine 129 are joined by a disulfide bond. The chain crosses the membrane as a helical span at residues 144 to 162 (WSFVCFAVIGLTALTLIAR). The Cytoplasmic segment spans residues 163–167 (LARQR).

The protein belongs to the DsbB family.

The protein localises to the cell inner membrane. Required for disulfide bond formation in some periplasmic proteins. Acts by oxidizing the DsbA protein. The sequence is that of Disulfide bond formation protein B from Polaromonas naphthalenivorans (strain CJ2).